A 375-amino-acid polypeptide reads, in one-letter code: Chaperone protein DnaJ (375 aa).

The J domain occupies 5 to 68 (DYYEILGVSK…KKRAQYDQFG (64 aa)). The CR-type zinc-finger motif lies at 135 to 217 (GISKNINYDR…CYGKKVINER (83 aa)). Zn(2+) is bound by residues Cys-148, Cys-151, Cys-165, Cys-168, Cys-191, Cys-194, Cys-205, and Cys-208. CXXCXGXG motif repeat units lie at residues 148–155 (CHKCQGTG), 165–172 (CTKCHGRG), 191–198 (CHECEGTG), and 205–212 (CEQCYGKK).

This sequence belongs to the DnaJ family. As to quaternary structure, homodimer. Requires Zn(2+) as cofactor.

The protein resides in the cytoplasm. In terms of biological role, participates actively in the response to hyperosmotic and heat shock by preventing the aggregation of stress-denatured proteins and by disaggregating proteins, also in an autonomous, DnaK-independent fashion. Unfolded proteins bind initially to DnaJ; upon interaction with the DnaJ-bound protein, DnaK hydrolyzes its bound ATP, resulting in the formation of a stable complex. GrpE releases ADP from DnaK; ATP binding to DnaK triggers the release of the substrate protein, thus completing the reaction cycle. Several rounds of ATP-dependent interactions between DnaJ, DnaK and GrpE are required for fully efficient folding. Also involved, together with DnaK and GrpE, in the DNA replication of plasmids through activation of initiation proteins. In Ureaplasma parvum serovar 3 (strain ATCC 700970), this protein is Chaperone protein DnaJ.